The sequence spans 202 residues: 3-isopropylmalate dehydratase small subunit (202 aa).

It belongs to the LeuD family. LeuD type 1 subfamily. In terms of assembly, heterodimer of LeuC and LeuD.

The catalysed reaction is (2R,3S)-3-isopropylmalate = (2S)-2-isopropylmalate. It participates in amino-acid biosynthesis; L-leucine biosynthesis; L-leucine from 3-methyl-2-oxobutanoate: step 2/4. In terms of biological role, catalyzes the isomerization between 2-isopropylmalate and 3-isopropylmalate, via the formation of 2-isopropylmaleate. The polypeptide is 3-isopropylmalate dehydratase small subunit (Rhizobium etli (strain CIAT 652)).